Reading from the N-terminus, the 306-residue chain is Ornithine carbamoyltransferase (306 aa).

Carbamoyl phosphate-binding positions include 53 to 56, glutamine 80, arginine 104, and 131 to 134; these read STRT and HPCQ. L-ornithine contacts are provided by residues asparagine 162, aspartate 220, and 224–225; that span reads SM. Residues 260–261 and arginine 288 each bind carbamoyl phosphate; that span reads CL.

This sequence belongs to the aspartate/ornithine carbamoyltransferase superfamily. OTCase family.

The protein localises to the cytoplasm. It carries out the reaction carbamoyl phosphate + L-ornithine = L-citrulline + phosphate + H(+). Its pathway is amino-acid biosynthesis; L-arginine biosynthesis; L-arginine from L-ornithine and carbamoyl phosphate: step 1/3. Reversibly catalyzes the transfer of the carbamoyl group from carbamoyl phosphate (CP) to the N(epsilon) atom of ornithine (ORN) to produce L-citrulline. This Dechloromonas aromatica (strain RCB) protein is Ornithine carbamoyltransferase.